The sequence spans 305 residues: UDP-3-O-acyl-N-acetylglucosamine deacetylase (305 aa).

Zn(2+) contacts are provided by His-79, His-238, and Asp-242. The active-site Proton donor is His-265.

This sequence belongs to the LpxC family. Zn(2+) serves as cofactor.

The enzyme catalyses a UDP-3-O-[(3R)-3-hydroxyacyl]-N-acetyl-alpha-D-glucosamine + H2O = a UDP-3-O-[(3R)-3-hydroxyacyl]-alpha-D-glucosamine + acetate. Its pathway is glycolipid biosynthesis; lipid IV(A) biosynthesis; lipid IV(A) from (3R)-3-hydroxytetradecanoyl-[acyl-carrier-protein] and UDP-N-acetyl-alpha-D-glucosamine: step 2/6. Functionally, catalyzes the hydrolysis of UDP-3-O-myristoyl-N-acetylglucosamine to form UDP-3-O-myristoylglucosamine and acetate, the committed step in lipid A biosynthesis. In Pasteurella multocida (strain Pm70), this protein is UDP-3-O-acyl-N-acetylglucosamine deacetylase.